The following is a 397-amino-acid chain: Diphosphomevalonate decarboxylase (397 aa).

Residues 19–22 (YWGK), Arg74, 153–158 (SGSACR), and Thr209 each bind (R)-5-diphosphomevalonate. The interval 378–397 (GPGPQDTKSSLIDPETGLPR) is disordered.

The protein belongs to the diphosphomevalonate decarboxylase family. Homodimer.

It carries out the reaction (R)-5-diphosphomevalonate + ATP = isopentenyl diphosphate + ADP + phosphate + CO2. It functions in the pathway isoprenoid biosynthesis; isopentenyl diphosphate biosynthesis via mevalonate pathway; isopentenyl diphosphate from (R)-mevalonate: step 3/3. Diphosphomevalonate decarboxylase; part of the second module of ergosterol biosynthesis pathway that includes the middle steps of the pathway. The second module is carried out in the vacuole and involves the formation of farnesyl diphosphate, which is also an important intermediate in the biosynthesis of ubiquinone, dolichol, heme and prenylated proteins. Activity by the mevalonate kinase ERG12 first converts mevalonate into 5-phosphomevalonate. 5-phosphomevalonate is then further converted to 5-diphosphomevalonate by the phosphomevalonate kinase ERG8. The diphosphomevalonate decarboxylase MVD1/ERG19 then produces isopentenyl diphosphate. The isopentenyl-diphosphate delta-isomerase IDI1 then catalyzes the 1,3-allylic rearrangement of the homoallylic substrate isopentenyl (IPP) to its highly electrophilic allylic isomer, dimethylallyl diphosphate (DMAPP). Finally the farnesyl diphosphate synthase ERG20 catalyzes the sequential condensation of isopentenyl pyrophosphate with dimethylallyl pyrophosphate, and then with the resultant geranylpyrophosphate to the ultimate product farnesyl pyrophosphate. The chain is Diphosphomevalonate decarboxylase from Eremothecium gossypii (strain ATCC 10895 / CBS 109.51 / FGSC 9923 / NRRL Y-1056) (Yeast).